The sequence spans 23 residues: Septenin 2 (23 aa).

Expressed in skin glands.

The protein resides in the secreted. Its function is as follows. May act as an antimicrobial peptide. This chain is Septenin 2, found in Osteopilus septentrionalis (Cuban treefrog).